Consider the following 735-residue polypeptide: Rho GTPase-activating protein SYDE1 (735 aa).

Disordered stretches follow at residues 1 to 253 (MAEP…PYEV), 601 to 655 (PDTR…AGDW), and 669 to 706 (FLSGPDYDHVTGSDSEEDEDESGEPRGTTDFEDEFDAP). The span at 14–47 (RGREKLPRKKSDAKDRGRPAQRSEPKPPEPEPRV) shows a compositional bias: basic and acidic residues. A compositionally biased stretch (low complexity) spans 151–160 (PTKTSRTKSP). Residues serine 224, serine 231, serine 235, and serine 244 each carry the phosphoserine modification. Residues 249-366 (RPYEVGPSAR…FRGCQAQQLA (118 aa)) form the C2 domain. One can recognise a Rho-GAP domain in the interval 398–604 (LPLQLLVERE…YLLQSWPDTR (207 aa)). Positions 669–679 (FLSGPDYDHVT) are enriched in basic and acidic residues. Residues serine 681 and serine 683 each carry the phosphoserine modification.

Palmitoylated. Probably palmitoylated by ZDHHC3 and ZDHHC7.

In terms of biological role, GTPase activator for the Rho-type GTPases. As a GCM1 downstream effector, it is involved in placental development and positively regulates trophoblast cells migration. It regulates cytoskeletal remodeling by controlling the activity of Rho GTPases including RHOA, CDC42 and RAC1. The protein is Rho GTPase-activating protein SYDE1 (Syde1) of Rattus norvegicus (Rat).